The sequence spans 124 residues: Small ribosomal subunit protein uS12 (124 aa).

The residue at position 89 (Asp89) is a 3-methylthioaspartic acid.

This sequence belongs to the universal ribosomal protein uS12 family. Part of the 30S ribosomal subunit. Contacts proteins S8 and S17. May interact with IF1 in the 30S initiation complex.

Its function is as follows. With S4 and S5 plays an important role in translational accuracy. Interacts with and stabilizes bases of the 16S rRNA that are involved in tRNA selection in the A site and with the mRNA backbone. Located at the interface of the 30S and 50S subunits, it traverses the body of the 30S subunit contacting proteins on the other side and probably holding the rRNA structure together. The combined cluster of proteins S8, S12 and S17 appears to hold together the shoulder and platform of the 30S subunit. This Shewanella piezotolerans (strain WP3 / JCM 13877) protein is Small ribosomal subunit protein uS12.